Here is a 382-residue protein sequence, read N- to C-terminus: Pyruvate dehydrogenase E1 component subunit beta, mitochondrial (382 aa).

The N-terminal 46 residues, 1–46 (MSRFLRPAFRLATTATRASTIRPTPSSLITKAAAVPTTRLLQKRSY), are a transit peptide targeting the mitochondrion. Glu112 lines the thiamine diphosphate pocket. 5 residues coordinate K(+): Ile165, Ala213, Ile214, Asp216, and Asn218.

As to quaternary structure, eukaryotic pyruvate dehydrogenase (PDH) complexes are organized as a core consisting of the oligomeric dihydrolipoamide acetyl-transferase (E2), around which are arranged multiple copies of pyruvate dehydrogenase (E1), dihydrolipoamide dehydrogenase (E3) and protein X (E3BP) bound by non-covalent bonds. The Chaetomium thermophilum PDH complex contains 60 E2 units, 12 E3BP units, about 20 E1 units, and 12 or more E3 units. The units are organized in 1 E2 60-mer, 4 E3BP trimers, about 20 E1 tetramers, and a maximum of 12 E3 dimers. Pyruvate dehydrogenase (E1) is active as a tetramer of 2 alpha and 2 beta subunits. The E3BP trimers are bound inside the icosahedral core with tetrahedral symmetry. Thiamine diphosphate is required as a cofactor.

The protein localises to the mitochondrion. The enzyme catalyses N(6)-[(R)-lipoyl]-L-lysyl-[protein] + pyruvate + H(+) = N(6)-[(R)-S(8)-acetyldihydrolipoyl]-L-lysyl-[protein] + CO2. Functionally, the 10-megadalton pyruvate dehydrogenase complex contains multiple copies of three enzymatic components: pyruvate dehydrogenase (E1), dihydrolipoamide acetyltransferase (E2) and lipoamide dehydrogenase (E3) and catalyzes the overall oxidative decarboxylation of pyruvate to form acetyl-CoA and CO(2). Within the complex, pyruvate and thiamine pyrophosphate (TPP or vitamin B1) are bound by pyruvate dehydrogenase E1 subunits alpha and beta and pyruvate is decarboxylated leading to the 2-carbon hydrohyethyl bound to TPP. The E2 component contains covalently-bound lipoyl cofactors and transfers the hydroxyethyl group from TPP to an oxidized form of covalently bound lipoamide, and the resulting acetyl group is then transferred to free coenzyme A to form acetyl-CoA and reduced dihydrolipoamide-E2. Finally, the flavoprotein dihydrolipoamide dehydrogenase (E3) re-oxidizes the lipoyl group of dihydrolipoamide-E2 to form lipoamide-E2 and NADH. A fourth subunit, E3BP, is responsible for tethering E3 in proximity to the core, forming the entire metabolon. This Chaetomium thermophilum (strain DSM 1495 / CBS 144.50 / IMI 039719) (Thermochaetoides thermophila) protein is Pyruvate dehydrogenase E1 component subunit beta, mitochondrial.